The following is a 264-amino-acid chain: Indole-3-glycerol phosphate synthase (264 aa).

This sequence belongs to the TrpC family.

The enzyme catalyses 1-(2-carboxyphenylamino)-1-deoxy-D-ribulose 5-phosphate + H(+) = (1S,2R)-1-C-(indol-3-yl)glycerol 3-phosphate + CO2 + H2O. It participates in amino-acid biosynthesis; L-tryptophan biosynthesis; L-tryptophan from chorismate: step 4/5. In Rhizorhabdus wittichii (strain DSM 6014 / CCUG 31198 / JCM 15750 / NBRC 105917 / EY 4224 / RW1) (Sphingomonas wittichii), this protein is Indole-3-glycerol phosphate synthase.